The primary structure comprises 374 residues: Eukaryotic translation initiation factor 3 subunit M (374 aa).

The 160-residue stretch at 180–339 folds into the PCI domain; that stretch reads EAAKVMVELL…KKVVVSHSTH (160 aa).

This sequence belongs to the eIF-3 subunit M family. In terms of assembly, component of the eukaryotic translation initiation factor 3 (eIF-3) complex, which is composed of 13 subunits: eif3a, eif3b, eif3c, eif3d, eif3e, eif3f, eif3g, eif3h, eif3i, eif3j, eif3k, eif3l and eif3m.

The protein resides in the cytoplasm. Its function is as follows. Component of the eukaryotic translation initiation factor 3 (eIF-3) complex, which is involved in protein synthesis of a specialized repertoire of mRNAs and, together with other initiation factors, stimulates binding of mRNA and methionyl-tRNAi to the 40S ribosome. The eIF-3 complex specifically targets and initiates translation of a subset of mRNAs involved in cell proliferation. In Xenopus laevis (African clawed frog), this protein is Eukaryotic translation initiation factor 3 subunit M (eif3m).